The chain runs to 323 residues: Methenyltetrahydromethanopterin cyclohydrolase (323 aa).

Belongs to the MCH family.

The protein resides in the cytoplasm. The catalysed reaction is 5,10-methenyl-5,6,7,8-tetrahydromethanopterin + H2O = N(5)-formyl-5,6,7,8-tetrahydromethanopterin + H(+). Its pathway is one-carbon metabolism; methanogenesis from CO(2); 5,10-methenyl-5,6,7,8-tetrahydromethanopterin from CO(2): step 3/3. Functionally, catalyzes the reversible interconversion of 5-formyl-H(4)MPT to methenyl-H(4)MPT(+). The protein is Methenyltetrahydromethanopterin cyclohydrolase of Methanococcus vannielii (strain ATCC 35089 / DSM 1224 / JCM 13029 / OCM 148 / SB).